Here is a 321-residue protein sequence, read N- to C-terminus: D-alanine--D-alanine ligase (321 aa).

In terms of domain architecture, ATP-grasp spans 121 to 315 (RSWFLTNNIN…FTNLIEEIIK (195 aa)). 147-199 (PVKRPYVIKPLTQGSSIGVEVIFEEDDFNFADYNFPYGYQVIIEQYIKGRELQ) serves as a coordination point for ATP. Mg(2+) is bound by residues glutamate 268, glutamate 282, and asparagine 284.

It belongs to the D-alanine--D-alanine ligase family. It depends on Mg(2+) as a cofactor. The cofactor is Mn(2+).

It localises to the cytoplasm. The enzyme catalyses 2 D-alanine + ATP = D-alanyl-D-alanine + ADP + phosphate + H(+). It participates in cell wall biogenesis; peptidoglycan biosynthesis. Functionally, cell wall formation. This Rickettsia felis (strain ATCC VR-1525 / URRWXCal2) (Rickettsia azadi) protein is D-alanine--D-alanine ligase.